The chain runs to 358 residues: Glutamine synthetase (358 aa).

Residues 26-105 form the GS beta-grasp domain; sequence ILAEYIWIDG…VLAECWNADG (80 aa). The 247-residue stretch at 112–358 folds into the GS catalytic domain; the sequence is HRHECAKIME…IMMETICGGI (247 aa).

Belongs to the glutamine synthetase family. In terms of assembly, homooctamer.

The protein resides in the cytoplasm. It catalyses the reaction L-glutamate + NH4(+) + ATP = L-glutamine + ADP + phosphate + H(+). In Tuber borchii (White truffle), this protein is Glutamine synthetase (GLN1).